The following is a 538-amino-acid chain: Thiamine transport system permease protein ThiP (538 aa).

The next 12 helical transmembrane spans lie at 19-39 (VVVI…IFAL), 57-77 (LILF…FFGL), 97-117 (LMSL…IGIY), 141-161 (LSGI…QLFL), 202-222 (FSLI…LGGG), 242-262 (LPKA…LFSL), 293-313 (ILVL…ILIS), 337-357 (LSIA…LLLL), 376-396 (AGMV…FLLL), 406-426 (LFII…LRIL), 466-486 (YAFA…ALFG), and 509-529 (AAVT…FIHT). The ABC transmembrane type-1 1 domain occupies 58–263 (ILFSFGQALL…VFCLILFSLT (206 aa)). Positions 333–528 (LGYSLSIAPL…LCGILFAFIH (196 aa)) constitute an ABC transmembrane type-1 2 domain.

It belongs to the binding-protein-dependent transport system permease family. CysTW subfamily. In terms of assembly, the complex is composed of two ATP-binding proteins (ThiQ), two transmembrane proteins (ThiP) and a solute-binding protein (ThiB).

It localises to the cell inner membrane. In terms of biological role, part of the ABC transporter complex ThiBPQ involved in thiamine import. Probably responsible for the translocation of the substrate across the membrane. This chain is Thiamine transport system permease protein ThiP (thiP), found in Haemophilus influenzae (strain ATCC 51907 / DSM 11121 / KW20 / Rd).